Here is a 280-residue protein sequence, read N- to C-terminus: MKVVHTIQDLRDHLRGQNRVAFVPTMGNLHEGHLALMKLARQHGDPVVTSIFVNRLQFGPNEDFDRYPRTLPDDVAKMERDRDVYLVFAPDEREMYPEPQNYRVLPPDDLGDILEGEFRPGFFTGVCTVVMKLLACVQPRVAVFGKKDYQQLMVVRNMCRQLQLPVEILAHETVRADDGLALSSRNRYLSEAERAEAPVLYETLRGIAQRRAGGEQDPAALERVAAQALADRGWKVDYVAVRRQRDLKAPDVAEMSAGEPLVALAAAKLGATRLIDNLEF.

Position 26 to 33 (26 to 33 (MGNLHEGH)) interacts with ATP. H33 functions as the Proton donor in the catalytic mechanism. A (R)-pantoate-binding site is contributed by Q57. Position 57 (Q57) interacts with beta-alanine. 145 to 148 (GKKD) provides a ligand contact to ATP. Q151 serves as a coordination point for (R)-pantoate. ATP is bound by residues V174 and 182–185 (LSSR).

Belongs to the pantothenate synthetase family. Homodimer.

The protein localises to the cytoplasm. The enzyme catalyses (R)-pantoate + beta-alanine + ATP = (R)-pantothenate + AMP + diphosphate + H(+). It functions in the pathway cofactor biosynthesis; (R)-pantothenate biosynthesis; (R)-pantothenate from (R)-pantoate and beta-alanine: step 1/1. Functionally, catalyzes the condensation of pantoate with beta-alanine in an ATP-dependent reaction via a pantoyl-adenylate intermediate. The protein is Pantothenate synthetase of Bordetella bronchiseptica (strain ATCC BAA-588 / NCTC 13252 / RB50) (Alcaligenes bronchisepticus).